Consider the following 263-residue polypeptide: Small ribosomal subunit protein eS4 (263 aa).

The region spanning 42–104 is the S4 RNA-binding domain; sequence LPLIIFLRNR…TGEHFRLVYD (63 aa).

It belongs to the eukaryotic ribosomal protein eS4 family. In terms of assembly, component of the small ribosomal subunit.

Its subcellular location is the cytoplasm. Functionally, component of the small ribosomal subunit. The ribosome is a large ribonucleoprotein complex responsible for the synthesis of proteins in the cell. The chain is Small ribosomal subunit protein eS4 (rps4) from Xenopus tropicalis (Western clawed frog).